The following is a 101-amino-acid chain: RNA-binding protein Hfq (101 aa).

The 60-residue stretch at Asp-9–Val-68 folds into the Sm domain. The disordered stretch occupies residues Val-63 to Glu-101. Residues His-70–Ser-86 show a composition bias toward low complexity.

Belongs to the Hfq family. In terms of assembly, homohexamer.

In terms of biological role, RNA chaperone that binds small regulatory RNA (sRNAs) and mRNAs to facilitate mRNA translational regulation in response to envelope stress, environmental stress and changes in metabolite concentrations. Also binds with high specificity to tRNAs. The protein is RNA-binding protein Hfq of Sodalis glossinidius (strain morsitans).